Reading from the N-terminus, the 397-residue chain is 1-deoxy-D-xylulose 5-phosphate reductoisomerase (397 aa).

NADPH is bound by residues Thr10, Gly11, Ser12, Ile13, Gly36, Asn38, and Asn128. Lys129 provides a ligand contact to 1-deoxy-D-xylulose 5-phosphate. NADPH is bound at residue Glu130. Asp154 lines the Mn(2+) pocket. Positions 155, 156, 180, and 203 each coordinate 1-deoxy-D-xylulose 5-phosphate. Glu156 is a Mn(2+) binding site. Residue Gly209 coordinates NADPH. 1-deoxy-D-xylulose 5-phosphate is bound by residues Asn221, Lys222, and Glu225. Glu225 serves as a coordination point for Mn(2+).

The protein belongs to the DXR family. Mg(2+) is required as a cofactor. Mn(2+) serves as cofactor.

The catalysed reaction is 2-C-methyl-D-erythritol 4-phosphate + NADP(+) = 1-deoxy-D-xylulose 5-phosphate + NADPH + H(+). It participates in isoprenoid biosynthesis; isopentenyl diphosphate biosynthesis via DXP pathway; isopentenyl diphosphate from 1-deoxy-D-xylulose 5-phosphate: step 1/6. Catalyzes the NADPH-dependent rearrangement and reduction of 1-deoxy-D-xylulose-5-phosphate (DXP) to 2-C-methyl-D-erythritol 4-phosphate (MEP). This is 1-deoxy-D-xylulose 5-phosphate reductoisomerase from Solibacter usitatus (strain Ellin6076).